The sequence spans 284 residues: Bifunctional protein FolD (284 aa).

NADP(+) is bound by residues 166–168 (GAS) and I232.

It belongs to the tetrahydrofolate dehydrogenase/cyclohydrolase family. Homodimer.

The enzyme catalyses (6R)-5,10-methylene-5,6,7,8-tetrahydrofolate + NADP(+) = (6R)-5,10-methenyltetrahydrofolate + NADPH. It carries out the reaction (6R)-5,10-methenyltetrahydrofolate + H2O = (6R)-10-formyltetrahydrofolate + H(+). Its pathway is one-carbon metabolism; tetrahydrofolate interconversion. Functionally, catalyzes the oxidation of 5,10-methylenetetrahydrofolate to 5,10-methenyltetrahydrofolate and then the hydrolysis of 5,10-methenyltetrahydrofolate to 10-formyltetrahydrofolate. This Shewanella sp. (strain ANA-3) protein is Bifunctional protein FolD.